Reading from the N-terminus, the 89-residue chain is MSLSAETKAKILADFGRCENDTGSTEVQVALLTAQINHLQGHFKEHIHDHHSRRGLLRMVSARRKLSAYLKRTDVARYTAMIQKLGLRR.

The protein belongs to the universal ribosomal protein uS15 family. In terms of assembly, part of the 30S ribosomal subunit. Forms a bridge to the 50S subunit in the 70S ribosome, contacting the 23S rRNA.

In terms of biological role, one of the primary rRNA binding proteins, it binds directly to 16S rRNA where it helps nucleate assembly of the platform of the 30S subunit by binding and bridging several RNA helices of the 16S rRNA. Forms an intersubunit bridge (bridge B4) with the 23S rRNA of the 50S subunit in the ribosome. The sequence is that of Small ribosomal subunit protein uS15 from Shewanella frigidimarina (strain NCIMB 400).